The chain runs to 594 residues: MGVGGTSASDTALSLCPTAPEWPPRNGSSGRAWGGPLQSGAPINSTDPLGPQLEPPGGGPATADPTVGCMGCSGEGAASSVPPVPDAAQDPRLGVTGPTDGDGGVVALGSPEEVGSGEQPTRAGVGPTEGLTPRPPGLPSPGLGLSSPGPNLGLPSLDLPNPNLGLPDPNLGLPNPSLGLPSPGPTPDRPIPNPNPSLDLPDPGLAIQTPNLGLSNPNIPLPSPSPGPGTEPDLLPVAEDSEVSMELPQPSSSPAPAQRARGRTDRTWLGAPEPISAAPGTAEPPEIIDVDYYDVFDGGHGPGGGHGAGGAAQREPGGAATPWGLHELYDDFTPFDEADFYPTTSFYAEGDDDAEEELEEDEEEEEEEDGGLEDENGYRPPASAAPRVPPPPSPTEGTPMARPRPGERAVPENSSECRSGYVRHNSSCRSVCDLVPSYCHNGGQCYLVESHGAFCRCNTQDYTWHKGTRCEAIVTDFQVLCVAVGSAALVLLLLFMLTVFFAKKLYLLKTENSKLRKTKYRTPSELHNDNFSLSTIAEGSHPNDDPGAPHKLQDPLKPGLKDEEPLSILSTAPEEGSKGEPGGCGVPCLHNNLG.

The span at methionine 1–alanine 12 shows a compositional bias: polar residues. The N-terminal stretch at methionine 1–threonine 18 is a signal peptide. 2 disordered regions span residues methionine 1–leucine 325 and threonine 343–arginine 418. Residues alanine 19–cysteine 481 lie on the Extracellular side of the membrane. 2 N-linked (GlcNAc...) asparagine glycosylation sites follow: asparagine 26 and asparagine 44. A compositionally biased stretch (low complexity) spans serine 140–proline 181. 2 stretches are compositionally biased toward pro residues: residues serine 182–asparagine 195 and isoleucine 219–glycine 229. Over residues proline 248–arginine 259 the composition is skewed to low complexity. Gly residues predominate over residues glycine 298–glycine 310. Residues alanine 338 to glycine 377 are interaction with TNC and TNR. The segment covering glutamate 349 to glutamate 375 has biased composition (acidic residues). N-linked (GlcNAc...) asparagine glycosylation is found at asparagine 413 and asparagine 425. The region spanning arginine 429 to glutamate 471 is the EGF-like domain. 3 cysteine pairs are disulfide-bonded: cysteine 432-cysteine 445, cysteine 439-cysteine 455, and cysteine 457-cysteine 470. A helical transmembrane segment spans residues valine 482–alanine 502. Residues lysine 503–glycine 594 lie on the Cytoplasmic side of the membrane. The segment at threonine 535–glycine 594 is disordered. Residues histidine 541–glutamate 564 show a composition bias toward basic and acidic residues.

As to quaternary structure, binds TNC and TNR. The 80 kDa form but not the 140 kDa form can bind TNC and TNR when expressed at the cell surface. Post-translationally, different forms exist: the 140 kDa form (also reported as 130 kDa), which probably consists of the entire protein, and the 38 and 80 kDa forms, which are probably cleaved in their N-terminus. Increase in synaptic activity, results in shedding of the extracellular domain and expression at the cell surface of a 38 kDa form. A form of 200 kDa has also been reported, which is probably hyperglycosylated. N-glycosylated. In terms of processing, O-glycosylated; contains chondroitin sulfate glycans. Part-time proteoglycan, the 200 kDa form is the only one containing chondroitin sulfate glycans. In terms of tissue distribution, expressed in astroglial and neuronal surfaces in different parts of the embryonic brain. Expressed in adult brain and retina (at protein level).

The protein resides in the cell membrane. In terms of biological role, may function as a growth and differentiation factor involved in neuritogenesis and more particularly in neurite extension. The polypeptide is Chondroitin sulfate proteoglycan 5 (CSPG5) (Gallus gallus (Chicken)).